Here is a 1340-residue protein sequence, read N- to C-terminus: Lysine-specific demethylase ELF6 (1340 aa).

In terms of domain architecture, JmjN spans 16–57 (APVFRPTDTEFADPIAYISKIEKEASAFGICKIIPPLPKPSK). Residues 195–245 (QRKRRGRGFYQRKTENNDPSGKNGEKSSPEVEKAPLASTSLSSQDSSKQKN) are disordered. Residues 217-227 (NGEKSSPEVEK) show a composition bias toward basic and acidic residues. A JmjC domain is found at 262-428 (NSSWNLQMIA…VAKEAAVRRA (167 aa)). Fe cation-binding residues include His-305, Glu-307, and His-396. The short motif at 818 to 825 (GKKEEKII) is the Nuclear localization signal 1 element. Positions 1092–1225 (GEPLESSDIL…SRQQEVPTTT (134 aa)) are disordered. Residues 1099–1115 (DILSSSNGDEASSNGLQ) show a composition bias toward polar residues. Low complexity predominate over residues 1124 to 1133 (ESEVSSSENT). Positions 1188 to 1201 (SLKHTETSDEEKKP) are enriched in basic and acidic residues. Residues 1215–1225 (GSRQQEVPTTT) are compositionally biased toward polar residues. C2H2-type zinc fingers lie at residues 1228 to 1250 (NRCY…THKR), 1251 to 1275 (NRCT…QRVH), 1281 to 1305 (FECS…LRLH), and 1311 to 1337 (YICK…KTMH). Zn(2+) is bound by residues Cys-1230, Cys-1235, His-1248, Cys-1253, Cys-1258, His-1265, His-1271, His-1275, Cys-1283, Cys-1288, His-1301, His-1305, Cys-1313, Cys-1318, His-1331, and His-1337. The Nuclear localization signal 2 signature appears at 1248 to 1255 (HKRNRCTH). The DNA-binding stretch occupies residues 1260–1333 (KKFRAHKYLV…FVSDYSRHRR (74 aa)).

Belongs to the JHDM3 histone demethylase family. Interacts with BZR2 (via N-terminus). In terms of tissue distribution, expressed at low levels in seedlings, cotyledons and leaves. Detected in inflorescences, stems, roots and siliques but not in shoot apical meristems or root tips. Accumulates in flowers and embryos.

It localises to the nucleus. It catalyses the reaction N(6),N(6),N(6)-trimethyl-L-lysyl(27)-[histone H3] + 2-oxoglutarate + O2 = N(6),N(6)-dimethyl-L-lysyl(27)-[histone H3] + formaldehyde + succinate + CO2. It carries out the reaction N(6),N(6)-dimethyl-L-lysyl(27)-[histone H3] + 2-oxoglutarate + O2 = N(6)-methyl-L-lysyl(27)-[histone H3] + formaldehyde + succinate + CO2. Functionally, histone demethylase that demethylates 'Lys-27' (H3K27me) of histone H3, thus acting as a positive regulator of gene expression. Demethylates tri-methylated (H3K27me3) and di-methylated (H3K27me2) H3K27me. Inactive on H3K27me1, H3K4me3, H3K9me2 and H3K36me3. Acts as a repressor of the photoperiodic flowering pathway and of FT. May also be active on H3K4me. Binds around the transcription start site of the FT locus. Required for epigenetic reprogramming by resetting the expression of the floral repressor FLC locus, thus aluviating cold-mediated FLC epigenetically silencing occurring during vernalization and preventing inapropriate epigenetic states inheritence. Its function is as follows. Together with REF6, required for H3K27me3 resetting (especially in constitutive heterochromatin within the pericentromeric regions) and transgenerational inheritance of histone marks, thus acting in safeguarding genome and epigenome integrity during sexual reproduction. This chain is Lysine-specific demethylase ELF6, found in Arabidopsis thaliana (Mouse-ear cress).